The following is a 383-amino-acid chain: Acetylornithine deacetylase (383 aa).

His80 provides a ligand contact to Zn(2+). The active site involves Asp82. Position 112 (Asp112) interacts with Zn(2+). Glu144 is a catalytic residue. Positions 145, 169, and 355 each coordinate Zn(2+).

Belongs to the peptidase M20A family. ArgE subfamily. Homodimer. Zn(2+) serves as cofactor. The cofactor is Co(2+). It depends on glutathione as a cofactor.

Its subcellular location is the cytoplasm. It carries out the reaction N(2)-acetyl-L-ornithine + H2O = L-ornithine + acetate. It participates in amino-acid biosynthesis; L-arginine biosynthesis; L-ornithine from N(2)-acetyl-L-ornithine (linear): step 1/1. Catalyzes the hydrolysis of the amide bond of N(2)-acetylated L-amino acids. Cleaves the acetyl group from N-acetyl-L-ornithine to form L-ornithine, an intermediate in L-arginine biosynthesis pathway, and a branchpoint in the synthesis of polyamines. This Pectobacterium atrosepticum (strain SCRI 1043 / ATCC BAA-672) (Erwinia carotovora subsp. atroseptica) protein is Acetylornithine deacetylase.